Consider the following 205-residue polypeptide: LexA repressor (205 aa).

A DNA-binding region (H-T-H motif) is located at residues 28-48 (VREIGEAVGLASSSTVHGHLA). Residues serine 127 and lysine 165 each act as for autocatalytic cleavage activity in the active site.

Belongs to the peptidase S24 family. As to quaternary structure, homodimer. Following treatment with mitomycin C protein levels begin to decrease after a 5-min lag and do not return to their original levels for at least 90 minutes.

The enzyme catalyses Hydrolysis of Ala-|-Gly bond in repressor LexA.. Its function is as follows. Represses dinA, dinB, dinC, recA genes and itself by binding to the 14 bp palindromic sequence 5'-CGAACNNNNGTTCG-3'; some genes have a tandem consensus sequence and their binding is cooperative. In the presence of single-stranded DNA, RecA interacts with LexA causing an autocatalytic cleavage which disrupts the DNA-binding part of LexA, leading to derepression of the SOS regulon and eventually DNA repair; autocleavage is maximal at pH 11 in the absence of RecA and ssDNA. This is LexA repressor from Bacillus subtilis (strain 168).